Reading from the N-terminus, the 515-residue chain is Fibril protein (515 aa).

At Met1 the chain carries Blocked amino end (Met). Helical stretches follow at residues 21 to 34 (VKKY…IQHV), 206 to 228 (HKFK…FNLL), 357 to 376 (KIET…AEKC), and 426 to 440 (SNEF…LKDV).

It is found in the cytoplasm. Its subcellular location is the cytoskeleton. In terms of biological role, acts as a cytoskeletal structure involved in the shape and motility of spiroplasmas. This is Fibril protein from Spiroplasma citri.